The sequence spans 352 residues: AP2/ERF and B3 domain-containing transcription factor At1g51120 (352 aa).

The tract at residues Met-1–Ser-20 is disordered. Residues Val-7–Ser-20 show a composition bias toward polar residues. Residues Lys-46–Pro-103 constitute a DNA-binding region (AP2/ERF). Positions Phe-178–His-297 form a DNA-binding region, TF-B3.

Belongs to the AP2/ERF transcription factor family. RAV subfamily.

The protein localises to the nucleus. Probably acts as a transcriptional activator. Binds to the GCC-box pathogenesis-related promoter element. May be involved in the regulation of gene expression by stress factors and by components of stress signal transduction pathways. The protein is AP2/ERF and B3 domain-containing transcription factor At1g51120 of Arabidopsis thaliana (Mouse-ear cress).